Here is a 33-residue protein sequence, read N- to C-terminus: Gaegurin-3 (33 aa).

The cysteines at positions 27 and 33 are disulfide-linked.

Belongs to the frog skin active peptide (FSAP) family. Brevinin subfamily. Monomer. As to expression, expressed by the skin glands.

It localises to the secreted. Its function is as follows. Has a non-hemolytic activity. Has a broad spectrum of activity against both Gram-positive and Gram-negative bacteria, fungi and protozoa. The sequence is that of Gaegurin-3 (GGN3) from Glandirana rugosa (Japanese wrinkled frog).